The chain runs to 392 residues: SH3 domain-binding protein 5-like (392 aa).

Residues 1 to 57 (MADLKKAAGGRETPQGELRSEVVEDEGPRSPVAEEPGGSGSNSSETKLSPREEEELD) are disordered. Residue T13 is modified to Phosphothreonine. A compositionally biased stretch (basic and acidic residues) spans 18-28 (LRSEVVEDEGP). Phosphoserine occurs at positions 30 and 49. Coiled-coil stretches lie at residues 59–140 (RIQE…YERA) and 169–272 (WQEM…EQIH). Positions 275–332 (RRGLPPHPLGPRRSSPVGAEAGPEGIEDGDSGIEGAEGGGLEEGSSLGPGPGPDTDTL) are disordered. The span at 317–332 (EGSSLGPGPGPDTDTL) shows a compositional bias: low complexity. Phosphoserine is present on residues S342, S349, S357, S361, and S377. The tract at residues 364 to 392 (GQELGAQSRGRRGSDIGVRGGRHQRSVSL) is disordered. Residues 383–392 (GGRHQRSVSL) show a composition bias toward basic residues.

Belongs to the SH3BP5 family.

Functionally, functions as a guanine nucleotide exchange factor (GEF) for RAB11A. The chain is SH3 domain-binding protein 5-like (Sh3bp5l) from Mus musculus (Mouse).